A 239-amino-acid polypeptide reads, in one-letter code: Phosphoribosylaminoimidazole-succinocarboxamide synthase (239 aa).

Belongs to the SAICAR synthetase family.

It catalyses the reaction 5-amino-1-(5-phospho-D-ribosyl)imidazole-4-carboxylate + L-aspartate + ATP = (2S)-2-[5-amino-1-(5-phospho-beta-D-ribosyl)imidazole-4-carboxamido]succinate + ADP + phosphate + 2 H(+). Its pathway is purine metabolism; IMP biosynthesis via de novo pathway; 5-amino-1-(5-phospho-D-ribosyl)imidazole-4-carboxamide from 5-amino-1-(5-phospho-D-ribosyl)imidazole-4-carboxylate: step 1/2. This Bacillus cereus (strain 03BB102) protein is Phosphoribosylaminoimidazole-succinocarboxamide synthase.